A 317-amino-acid chain; its full sequence is MGYDVTRFQGDVDEDLICPICSGVLEEPVQAPHCEHAFCNACITQWFSQQQTCPVDRSVVTVAHLRPVPRIMRNMLSKLQIACDNAVFGCSAVVRLDNLMSHLSDCEHNPKRPVTCEQGCGLEMPKDELPNHNCIKHLRSVVQQQQTRIAELEKTSAEHKHQLAEQKRDIQLLKAYMRAIRSVNPNLQNLEETIEYNEILEWVNSLQPARVTRWGGMISTPDAVLQAVIKRSLVESGCPASIVNELIENAHERSWPQGLATLETRQMNRRYYENYVAKRIPGKQAVVVMACENQHMGDDMVQEPGLVMIFAHGVEEI.

Residues 18–57 (CPICSGVLEEPVQAPHCEHAFCNACITQWFSQQQTCPVDR) form an RING-type; degenerate zinc finger. The SIAH-type; degenerate zinc-finger motif lies at 78–138 (KLQIACDNAV…LPNHNCIKHL (61 aa)).

In terms of assembly, interacts with USP8, ERBB3, PRKN and BIRC6. Interacts with CSF2RB, EPOR, IL3RA, MYD88 and TBK1. Interacts with CLEC16A. Post-translationally, autoubiquitinated. Autoubiquitination leads to proteasomal degradation. Deubiquitinated by USP8 to get stabilized which induces apoptosis. As to expression, detected in ovary, testis and prostate.

It catalyses the reaction S-ubiquitinyl-[E2 ubiquitin-conjugating enzyme]-L-cysteine + [acceptor protein]-L-lysine = [E2 ubiquitin-conjugating enzyme]-L-cysteine + N(6)-ubiquitinyl-[acceptor protein]-L-lysine.. Its pathway is protein modification; protein ubiquitination. Functionally, acts as E3 ubiquitin-protein ligase and regulates the degradation of target proteins. Polyubiquitinates MYD88. Negatively regulates MYD88-dependent production of pro-inflammatory cytokines. Can promote TRIF-dependent production of type I interferon and inhibits infection with vesicular stomatitis virus. Promotes also activation of TBK1 and IRF3. Involved in the ubiquitination of erythropoietin (EPO) and interleukin-3 (IL-3) receptors. Thus, through maintaining basal levels of cytokine receptors, RNF41 is involved in the control of hematopoietic progenitor cell differentiation into myeloerythroid lineages. Contributes to the maintenance of steady-state ERBB3 levels by mediating its growth factor-independent degradation. Involved in the degradation of the inhibitor of apoptosis BIRC6 and thus is an important regulator of cell death by promoting apoptosis. Also acts as a PRKN modifier that accelerates its degradation, resulting in a reduction of PRKN activity, influencing the balance of intracellular redox state. The RNF41-PRKN pathway regulates autophagosome-lysosome fusion during late mitophagy. Mitophagy is a selective form of autophagy necessary for mitochondrial quality control. This is E3 ubiquitin-protein ligase NRDP1 (RNF41) from Homo sapiens (Human).